Here is a 137-residue protein sequence, read N- to C-terminus: Oleosin Ara h 11.0101 (137 aa).

The residue at position 2 (alanine 2) is an N-acetylalanine; alternate. 2 helical membrane-spanning segments follow: residues 27–47 (AVVA…GTVI) and 55–75 (LFVI…LLGL).

Belongs to the oleosin family. As to expression, expressed in seeds (at protein level).

The protein resides in the lipid droplet. The protein localises to the membrane. Its function is as follows. May have a structural role to stabilize the lipid body during desiccation of the seed by preventing coalescence of the oil. Probably interacts with both lipid and phospholipid moieties of lipid bodies. May also provide recognition signals for specific lipase anchorage in lipolysis during seedling growth. The polypeptide is Oleosin Ara h 11.0101 (Arachis hypogaea (Peanut)).